The primary structure comprises 624 residues: Ferredoxin-fold anticodon-binding domain-containing protein 1 (624 aa).

One can recognise an FDX-ACB domain in the interval 531–624 (LYPPCYVHDV…IQQHLYVIPR (94 aa)).

The polypeptide is Ferredoxin-fold anticodon-binding domain-containing protein 1 (FDXACB1) (Homo sapiens (Human)).